A 1320-amino-acid polypeptide reads, in one-letter code: Myopalladin (1320 aa).

An interaction with CARP region spans residues 1–522 (MQDDSIEAST…FTCTASNKYG (522 aa)). 3 disordered regions span residues 19–68 (SYLA…AFLS), 84–145 (NYDP…SETQ), and 165–271 (FKSH…PPRF). Basic and acidic residues-rich tracts occupy residues 23–35 (ETRH…RSRA) and 87–106 (PLEK…DQMK). Serine 101 is subject to Phosphoserine. Residues 107–130 (HSPNLSFEPNFCQDNPRSPTSSKE) show a composition bias toward polar residues. Serine 131 is subject to Phosphoserine. A compositionally biased stretch (basic residues) spans 168–182 (HSSKRIRPRACKNHK). The segment covering 186–201 (ESQNKVMQENSSSFSD) has biased composition (polar residues). A compositionally biased stretch (basic and acidic residues) spans 218–239 (DTRDNEVNHALEQQEAKRREAE). Residues 219-248 (TRDNEVNHALEQQEAKRREAEQAASEAAGG) are a coiled coil. Positions 240–258 (QAASEAAGGDTTPGSSPSS) are enriched in low complexity. Threonine 251 carries the phosphothreonine modification. Ig-like domains follow at residues 269–359 (PRFT…IYIE) and 435–531 (PVFT…AQLH). Cystine bridges form between cysteine 290–cysteine 341 and cysteine 456–cysteine 515. Residues 554–655 (AAIEPQPSPP…VKEPPPVLAK (102 aa)) form a disordered region. The span at 559 to 575 (QPSPPHSEPPSVEQPPK) shows a compositional bias: pro residues. Residue serine 644 is modified to Phosphoserine. Positions 649-677 (PPPVLAKPKLDSTQLQQLHNQVLLEQHQL) are interaction with NEB. Residue serine 759 is modified to Phosphoserine. The tract at residues 763–805 (LLVSHPSVQTKSPGGLSIQNEPLPPGPTEPTPPPFTFSIPSGN) is disordered. Residues 768-782 (PSVQTKSPGGLSIQN) are compositionally biased toward polar residues. Over residues 784 to 797 (PLPPGPTEPTPPPF) the composition is skewed to pro residues. Residues serine 813, serine 818, serine 867, serine 907, and serine 928 each carry the phosphoserine modification. Positions 844–876 (NAMGLPRSAPSMPSQGLAKKNTKSPQPVNDDNI) are disordered. 3 consecutive Ig-like domains span residues 945-1029 (PIFD…GRIS), 1073-1162 (PHFL…LELS), and 1172-1262 (PVIL…ARLD). An interaction with ACTN region spans residues 945 to 1320 (PIFDKRLKHF…SRSVVESDEL (376 aa)). An intrachain disulfide couples cysteine 1094 to cysteine 1146.

Belongs to the myotilin/palladin family. In terms of assembly, interacts with TTN/titin, NEB, NEBL, ACTN2 and CARP. As to expression, expressed in adult skeletal muscle and fetal heart.

The protein localises to the cytoplasm. It localises to the nucleus. It is found in the myofibril. The protein resides in the sarcomere. Its subcellular location is the z line. Functionally, component of the sarcomere that tethers together nebulin (skeletal muscle) and nebulette (cardiac muscle) to alpha-actinin, at the Z lines. This is Myopalladin (MYPN) from Homo sapiens (Human).